Here is a 334-residue protein sequence, read N- to C-terminus: Nucleoid-associated protein YPK_2796 (334 aa).

It belongs to the YejK family.

It localises to the cytoplasm. It is found in the nucleoid. The chain is Nucleoid-associated protein YPK_2796 from Yersinia pseudotuberculosis serotype O:3 (strain YPIII).